A 224-amino-acid polypeptide reads, in one-letter code: Prolactin-2C3 (224 aa).

The N-terminal stretch at 1-29 (MLPSSIQPCSWILLLLLVNSSLLWKNVAS) is a signal peptide. Asn19 carries an N-linked (GlcNAc...) asparagine glycan. A disulfide bridge links Cys33 with Cys40. N-linked (GlcNAc...) asparagine glycans are attached at residues Asn57, Asn75, and Asn88. Disulfide bonds link Cys87–Cys199 and Cys216–Cys224.

This sequence belongs to the somatotropin/prolactin family. N-glycosylated and sialylated. In terms of tissue distribution, expressed in placenta and hair follicles, with highest expression levels detected in the outer root sheath and no expression detected in bulb. Expressed in placenta, skin wounds, keratinocytes and weakly in embryonic fibroblasts. Expressed in brain, cerebellum and in Neuro-2a cell line. Not detected in liver, kidney, ovary, pituitary gland and brain.

The protein localises to the secreted. It localises to the endoplasmic reticulum. May have a role in embryonic development. It is likely to provide a growth stimulus to target cells in maternal and fetal tissues during the development of the embryo at mid-gestation. May play a role during wound healing and in the hair follicle cycle as a growth factor and/or an angiogenesis factor. May play a role in microvilli formation and cell proliferation of neuroblastoma cells. This chain is Prolactin-2C3 (Prl2c3), found in Mus musculus (Mouse).